Consider the following 76-residue polypeptide: MLKTDALLYFGSKTKLAQAAGIRLASLYSWKGDLVPEGRAMRLQEASGGELQYDPKVYDEYRKTKRAGRLNNENHS.

Residues 13–33 (KTKLAQAAGIRLASLYSWKGD) mediate DNA binding.

Functionally, this protein is a repressor of division inhibition gene dicB. The polypeptide is Repressor protein of division inhibition gene dicB (dicC) (Escherichia coli (strain K12)).